A 306-amino-acid polypeptide reads, in one-letter code: UDP-N-acetylenolpyruvoylglucosamine reductase (306 aa).

An FAD-binding PCMH-type domain is found at 29–193; the sequence is RVGGPADWLF…IRASLRGTPD (165 aa). Residue R173 is part of the active site. S222 acts as the Proton donor in catalysis. Residue E292 is part of the active site.

The protein belongs to the MurB family. The cofactor is FAD.

It is found in the cytoplasm. The enzyme catalyses UDP-N-acetyl-alpha-D-muramate + NADP(+) = UDP-N-acetyl-3-O-(1-carboxyvinyl)-alpha-D-glucosamine + NADPH + H(+). The protein operates within cell wall biogenesis; peptidoglycan biosynthesis. Cell wall formation. In Gluconobacter oxydans (strain 621H) (Gluconobacter suboxydans), this protein is UDP-N-acetylenolpyruvoylglucosamine reductase.